The following is a 411-amino-acid chain: Lissencephaly-1 homolog (411 aa).

Positions 9-41 (QREELNQAIADYLGTNGYADSLEAFRKEADLST) constitute a LisH domain. The stretch at 56-83 (TSVIRLQKKVMELEAKLTEAEKEVIEGA) forms a coiled coil. 7 WD repeats span residues 106–147 (GHRA…RTLK), 148–187 (GHTDSVQDVAFDAQGKLLVSCSADLSIKLWDFQQSYECVK), 191–230 (GHDHNVSSVAFVPAGDYVLSASRDRTIKMWEVATGYCVKT), 233–272 (GHREWVRMVRVHIEGSIFATCSNDHTIRVWLTNSKDCKVE), 275–334 (DHEH…CLLT), 337–376 (GHDNWVRGLAFHPGGKYLVSASDDKTIRVWDLRNKRCMKT), and 379–411 (AHQHFCTSIDFHKAHPYVISGSVDQTVKVWECR).

The protein belongs to the WD repeat LIS1/nudF family.

Its subcellular location is the cytoplasm. It is found in the cytoskeleton. The protein localises to the microtubule organizing center. It localises to the centrosome. In terms of biological role, positively regulates the activity of the minus-end directed microtubule motor protein dynein. May enhance dynein-mediated microtubule sliding by targeting dynein to the microtubule plus end. Required for several dynein- and microtubule-dependent processes. In Drosophila grimshawi (Hawaiian fruit fly), this protein is Lissencephaly-1 homolog.